Here is an 813-residue protein sequence, read N- to C-terminus: Lon protease (813 aa).

A Lon N-terminal domain is found at 30 to 225; sequence LPILPVRNIV…WLLQLMDKDI (196 aa). ATP is bound at residue 376 to 383; sequence GPPGVGKT. Residues 612–793 form the Lon proteolytic domain; sequence DDLAGIVTGL…DEVLAIALLK (182 aa). Catalysis depends on residues Ser699 and Lys742.

This sequence belongs to the peptidase S16 family. In terms of assembly, homohexamer. Organized in a ring with a central cavity.

It localises to the cytoplasm. The enzyme catalyses Hydrolysis of proteins in presence of ATP.. In terms of biological role, ATP-dependent serine protease that mediates the selective degradation of mutant and abnormal proteins as well as certain short-lived regulatory proteins. Required for cellular homeostasis and for survival from DNA damage and developmental changes induced by stress. Degrades polypeptides processively to yield small peptide fragments that are 5 to 10 amino acids long. Binds to DNA in a double-stranded, site-specific manner. This is Lon protease from Cytophaga hutchinsonii (strain ATCC 33406 / DSM 1761 / CIP 103989 / NBRC 15051 / NCIMB 9469 / D465).